The primary structure comprises 494 residues: Probable cytosol aminopeptidase (494 aa).

Mn(2+)-binding residues include K260 and D265. K272 is an active-site residue. 3 residues coordinate Mn(2+): D283, D342, and E344. R346 is an active-site residue.

The protein belongs to the peptidase M17 family. Requires Mn(2+) as cofactor.

It is found in the cytoplasm. The enzyme catalyses Release of an N-terminal amino acid, Xaa-|-Yaa-, in which Xaa is preferably Leu, but may be other amino acids including Pro although not Arg or Lys, and Yaa may be Pro. Amino acid amides and methyl esters are also readily hydrolyzed, but rates on arylamides are exceedingly low.. It catalyses the reaction Release of an N-terminal amino acid, preferentially leucine, but not glutamic or aspartic acids.. In terms of biological role, presumably involved in the processing and regular turnover of intracellular proteins. Catalyzes the removal of unsubstituted N-terminal amino acids from various peptides. This Bacillus thuringiensis (strain Al Hakam) protein is Probable cytosol aminopeptidase.